Consider the following 126-residue polypeptide: Anti-adapter protein IraD (126 aa).

Belongs to the GpW/Gp25 family. IraD subfamily. As to quaternary structure, interacts with RssB.

Its subcellular location is the cytoplasm. In terms of biological role, inhibits RpoS proteolysis by regulating RssB activity, thereby increasing the stability of the sigma stress factor RpoS during oxidative stress. Its effect on RpoS stability is due to its interaction with RssB, which probably blocks the interaction of RssB with RpoS, and the consequent delivery of the RssB-RpoS complex to the ClpXP protein degradation pathway. The polypeptide is Anti-adapter protein IraD (Salmonella arizonae (strain ATCC BAA-731 / CDC346-86 / RSK2980)).